The sequence spans 286 residues: Pantothenate synthetase (286 aa).

30–37 is a binding site for ATP; the sequence is MGNLHAGH. His-37 functions as the Proton donor in the catalytic mechanism. A (R)-pantoate-binding site is contributed by Gln-61. A beta-alanine-binding site is contributed by Gln-61. Residue 149-152 participates in ATP binding; sequence GQKD. Gln-155 contributes to the (R)-pantoate binding site. ATP-binding positions include Val-178 and 186–189; that span reads LSSR.

This sequence belongs to the pantothenate synthetase family. In terms of assembly, homodimer.

Its subcellular location is the cytoplasm. It catalyses the reaction (R)-pantoate + beta-alanine + ATP = (R)-pantothenate + AMP + diphosphate + H(+). It participates in cofactor biosynthesis; (R)-pantothenate biosynthesis; (R)-pantothenate from (R)-pantoate and beta-alanine: step 1/1. Functionally, catalyzes the condensation of pantoate with beta-alanine in an ATP-dependent reaction via a pantoyl-adenylate intermediate. The chain is Pantothenate synthetase from Stutzerimonas stutzeri (strain A1501) (Pseudomonas stutzeri).